The chain runs to 310 residues: HPr kinase/phosphorylase (310 aa).

Residues histidine 138 and lysine 159 contribute to the active site. 153–160 (GDSGIGKS) contributes to the ATP binding site. Serine 160 contacts Mg(2+). Aspartate 177 acts as the Proton acceptor; for phosphorylation activity. Proton donor; for dephosphorylation activity in catalysis. An important for the catalytic mechanism of both phosphorylation and dephosphorylation region spans residues 201–210 (LEIRGVGIID). Glutamate 202 provides a ligand contact to Mg(2+). The active site involves arginine 243. An important for the catalytic mechanism of dephosphorylation region spans residues 264–269 (PVKTGR).

Belongs to the HPrK/P family. As to quaternary structure, homohexamer. It depends on Mg(2+) as a cofactor.

The catalysed reaction is [HPr protein]-L-serine + ATP = [HPr protein]-O-phospho-L-serine + ADP + H(+). The enzyme catalyses [HPr protein]-O-phospho-L-serine + phosphate + H(+) = [HPr protein]-L-serine + diphosphate. Functionally, catalyzes the ATP- as well as the pyrophosphate-dependent phosphorylation of a specific serine residue in HPr, a phosphocarrier protein of the phosphoenolpyruvate-dependent sugar phosphotransferase system (PTS). HprK/P also catalyzes the pyrophosphate-producing, inorganic phosphate-dependent dephosphorylation (phosphorolysis) of seryl-phosphorylated HPr (P-Ser-HPr). The two antagonistic activities of HprK/P are regulated by several intracellular metabolites, which change their concentration in response to the absence or presence of rapidly metabolisable carbon sources (glucose, fructose, etc.) in the growth medium. Therefore, by controlling the phosphorylation state of HPr, HPrK/P is a sensor enzyme that plays a major role in the regulation of carbon metabolism and sugar transport: it mediates carbon catabolite repression (CCR), and regulates PTS-catalyzed carbohydrate uptake and inducer exclusion. The sequence is that of HPr kinase/phosphorylase from Streptococcus equi subsp. equi (strain 4047).